The following is a 287-amino-acid chain: Cysteine-rich repeat secretory protein 59 (287 aa).

Residues 1-26 form the signal peptide; the sequence is METTKKLSPIFCFSSLLCLFFTMNQA. Gnk2-homologous domains follow at residues 32-134 and 140-250; these read HMDT…DKFF and KKPN…ITTS. N-linked (GlcNAc...) asparagine glycosylation is found at asparagine 43, asparagine 47, asparagine 63, asparagine 72, asparagine 93, asparagine 103, asparagine 111, and asparagine 212.

The protein belongs to the cysteine-rich repeat secretory protein family.

It localises to the secreted. This is Cysteine-rich repeat secretory protein 59 (CRRSP59) from Arabidopsis thaliana (Mouse-ear cress).